The primary structure comprises 310 residues: Ribosomal RNA small subunit methyltransferase H (310 aa).

S-adenosyl-L-methionine-binding positions include 33-35 (AGH), D53, F79, D100, and Q107.

This sequence belongs to the methyltransferase superfamily. RsmH family.

Its subcellular location is the cytoplasm. It carries out the reaction cytidine(1402) in 16S rRNA + S-adenosyl-L-methionine = N(4)-methylcytidine(1402) in 16S rRNA + S-adenosyl-L-homocysteine + H(+). In terms of biological role, specifically methylates the N4 position of cytidine in position 1402 (C1402) of 16S rRNA. The sequence is that of Ribosomal RNA small subunit methyltransferase H from Clostridium tetani (strain Massachusetts / E88).